The following is a 158-amino-acid chain: Chromobox protein homolog 7 (158 aa).

The region spanning F11–Y69 is the Chromo domain. Residues K60 to V127 are disordered. The segment covering G68–R78 has biased composition (basic residues).

In terms of assembly, component of a PRC1-like complex. Distinct PRC1-like core complexes are composed of a RING1 subunit (RING1B or RING1A), one of the six PCGF proteins (PCGF1-6), one PHC protein (PHC1-3) and one of the CBX proteins (CBX2, CBX4, CBX6, CBX7 or CBX8). The composition of the PRC1 complex may differ between the PRC1 complex in pluripotent embryonic stem cells containing RNF2, CBX7 and PCGF2, and the PRC1 complex in differentiating cells containing RNF2, CBX2, CBX4 and BMI1. Interacts with RING1. Interacts with RNF2, PHC1 and PCGF2. Interacts (via chromodomain) with histone H3K9Me3 and H3K27me3. Interacts with H3K9Me2 and H4K20Me1. Interacts (via chromodomain) with single-stranded and double-stranded RNA; RNA binding seems to be required for the localization to chromatin. Interacts with PCGF1, PCGF3, PCGF5 and PCGF6. As to expression, expressed in embryonic stem cells.

It is found in the nucleus. The protein localises to the chromosome. Component of a Polycomb group (PcG) multiprotein PRC1-like complex, a complex class required to maintain the transcriptionally repressive state of many genes, including Hox genes, throughout development. PcG PRC1 complex acts via chromatin remodeling and modification of histones; it mediates monoubiquitination of histone H2A 'Lys-119', rendering chromatin heritably changed in its expressibility. Promotes histone H3 trimethylation at 'Lys-9' (H3K9me3). Binds to histone H3 trimethylated at 'Lys-9' (H3K9me3) or at 'Lys-27' (H3K27me3). Trimethylation at 'Lys-27' (H3K27me3) is important for chromatin recruitment. May possibly also bind trimethylated lysine residues in other proteins (in vitro). Binds non-coding, single-stranded RNA and double-stranded RNA. Plays a role in the timely repression of differentiation-specific genes in pluripotent embryonic stem cells to maintain the undifferentiated state. Regulator of cellular lifespan by maintaining the repression of CDKN2A, but not by inducing telomerase activity. The polypeptide is Chromobox protein homolog 7 (Cbx7) (Mus musculus (Mouse)).